The following is a 122-amino-acid chain: Large ribosomal subunit protein uL14 (122 aa).

It belongs to the universal ribosomal protein uL14 family. As to quaternary structure, part of the 50S ribosomal subunit. Forms a cluster with proteins L3 and L19. In the 70S ribosome, L14 and L19 interact and together make contacts with the 16S rRNA in bridges B5 and B8.

Binds to 23S rRNA. Forms part of two intersubunit bridges in the 70S ribosome. The sequence is that of Large ribosomal subunit protein uL14 from Chloroflexus aggregans (strain MD-66 / DSM 9485).